The primary structure comprises 603 residues: UvrABC system protein C (603 aa).

A GIY-YIG domain is found at 14 to 92 (ELPGVYRMLD…IKSLAPRYNI (79 aa)). The UVR domain occupies 201-236 (QEVTRRLTKSMEEASAKLAFEQAAVFRDQIQSLHQV).

This sequence belongs to the UvrC family. Interacts with UvrB in an incision complex.

It localises to the cytoplasm. Its function is as follows. The UvrABC repair system catalyzes the recognition and processing of DNA lesions. UvrC both incises the 5' and 3' sides of the lesion. The N-terminal half is responsible for the 3' incision and the C-terminal half is responsible for the 5' incision. In Dechloromonas aromatica (strain RCB), this protein is UvrABC system protein C.